Consider the following 126-residue polypeptide: UPF0212 protein TON_0350 (126 aa).

This sequence belongs to the UPF0212 family.

In Thermococcus onnurineus (strain NA1), this protein is UPF0212 protein TON_0350.